A 179-amino-acid polypeptide reads, in one-letter code: Ribosome maturation factor RimM (179 aa).

The PRC barrel domain occupies 100-176 (KEEFHLLELI…FIIINPPNGL (77 aa)).

Belongs to the RimM family. As to quaternary structure, binds ribosomal protein uS19.

It is found in the cytoplasm. Functionally, an accessory protein needed during the final step in the assembly of 30S ribosomal subunit, possibly for assembly of the head region. Essential for efficient processing of 16S rRNA. May be needed both before and after RbfA during the maturation of 16S rRNA. It has affinity for free ribosomal 30S subunits but not for 70S ribosomes. The chain is Ribosome maturation factor RimM from Prochlorococcus marinus (strain MIT 9215).